The primary structure comprises 460 residues: Cysteine--tRNA ligase (460 aa).

Cys-28 contacts Zn(2+). The 'HIGH' region signature appears at 30–40 (MTVYDYCHLGH). Zn(2+)-binding residues include Cys-209, His-234, and Glu-238. A 'KMSKS' region motif is present at residues 266–270 (KMSKS). Residue Lys-269 participates in ATP binding.

Belongs to the class-I aminoacyl-tRNA synthetase family. In terms of assembly, monomer. The cofactor is Zn(2+).

Its subcellular location is the cytoplasm. The catalysed reaction is tRNA(Cys) + L-cysteine + ATP = L-cysteinyl-tRNA(Cys) + AMP + diphosphate. This Pseudomonas aeruginosa (strain UCBPP-PA14) protein is Cysteine--tRNA ligase.